We begin with the raw amino-acid sequence, 503 residues long: 2-isopropylmalate synthase (503 aa).

The 261-residue stretch at 4-264 folds into the Pyruvate carboxyltransferase domain; it reads LYIFDTTLRD…EVSIKTEEIY (261 aa). Residues Asp-13, His-201, His-203, and Asn-237 each coordinate Mn(2+). Residues 388–503 are regulatory domain; the sequence is KLRHLQVVSG…NQLVMLKGKD (116 aa).

Belongs to the alpha-IPM synthase/homocitrate synthase family. LeuA type 1 subfamily. As to quaternary structure, homodimer. Mn(2+) is required as a cofactor.

The protein localises to the cytoplasm. The enzyme catalyses 3-methyl-2-oxobutanoate + acetyl-CoA + H2O = (2S)-2-isopropylmalate + CoA + H(+). The protein operates within amino-acid biosynthesis; L-leucine biosynthesis; L-leucine from 3-methyl-2-oxobutanoate: step 1/4. In terms of biological role, catalyzes the condensation of the acetyl group of acetyl-CoA with 3-methyl-2-oxobutanoate (2-ketoisovalerate) to form 3-carboxy-3-hydroxy-4-methylpentanoate (2-isopropylmalate). The polypeptide is 2-isopropylmalate synthase (Dictyoglomus turgidum (strain DSM 6724 / Z-1310)).